The primary structure comprises 398 residues: Phosphoglycerate kinase (398 aa).

Substrate-binding positions include 21–23 (DFN), R36, 59–62 (HLGR), R119, and R157. ATP-binding positions include K208, G296, E327, and 354-357 (GGDS).

It belongs to the phosphoglycerate kinase family. In terms of assembly, monomer.

Its subcellular location is the cytoplasm. It catalyses the reaction (2R)-3-phosphoglycerate + ATP = (2R)-3-phospho-glyceroyl phosphate + ADP. The protein operates within carbohydrate degradation; glycolysis; pyruvate from D-glyceraldehyde 3-phosphate: step 2/5. In Streptococcus pyogenes serotype M3 (strain ATCC BAA-595 / MGAS315), this protein is Phosphoglycerate kinase.